Here is a 496-residue protein sequence, read N- to C-terminus: Aspartyl/glutamyl-tRNA(Asn/Gln) amidotransferase subunit B (496 aa).

This sequence belongs to the GatB/GatE family. GatB subfamily. Heterotrimer of A, B and C subunits.

The catalysed reaction is L-glutamyl-tRNA(Gln) + L-glutamine + ATP + H2O = L-glutaminyl-tRNA(Gln) + L-glutamate + ADP + phosphate + H(+). It catalyses the reaction L-aspartyl-tRNA(Asn) + L-glutamine + ATP + H2O = L-asparaginyl-tRNA(Asn) + L-glutamate + ADP + phosphate + 2 H(+). Functionally, allows the formation of correctly charged Asn-tRNA(Asn) or Gln-tRNA(Gln) through the transamidation of misacylated Asp-tRNA(Asn) or Glu-tRNA(Gln) in organisms which lack either or both of asparaginyl-tRNA or glutaminyl-tRNA synthetases. The reaction takes place in the presence of glutamine and ATP through an activated phospho-Asp-tRNA(Asn) or phospho-Glu-tRNA(Gln). In Xanthobacter autotrophicus (strain ATCC BAA-1158 / Py2), this protein is Aspartyl/glutamyl-tRNA(Asn/Gln) amidotransferase subunit B.